Consider the following 280-residue polypeptide: MPRRHRFAAAIAAVAVAAVLLVTLTVAVVTHGDGAFAPAGTPAGAGASAGIGSDTGSNASEDSDMFPTIVFGDTVIERKEYVAALKAQHGAARLYFRQTYGVDPAEDGWDKAHDGEVPCRWLASRAIDELRRRHAAYLIGVDLGQVADDSYASIVARMEAVNSGNAELKSDGGIVYGRTGFDIDSYLSYELSALKNAYTGDESNPGMSLSDDEVRRYYDEHDWTKDGVDGKTPLDEVRGNVKAQMRSERYDELVSQRAEAIDVTDLPWDALYRFTAGRLG.

An N-terminal signal peptide occupies residues 1–37; it reads MPRRHRFAAAIAAVAVAAVLLVTLTVAVVTHGDGAFA.

Homodimer.

It is found in the secreted. Its function is as follows. Chaperone required for active expression of the lacto-N-biosidase LnbX. The chain is Chaperone for lacto-N-biosidase from Bifidobacterium longum subsp. longum (strain ATCC 15707 / DSM 20219 / JCM 1217 / NCTC 11818 / E194b).